Reading from the N-terminus, the 64-residue chain is Translation machinery-associated protein 7B (64 aa).

The disordered stretch occupies residues 1-38 (MSSHEGGKKKALKQPKKQAKEMDEEEKAFKQKQKEEQK). The span at 27-38 (KAFKQKQKEEQK) shows a compositional bias: basic and acidic residues.

The protein belongs to the TMA7 family.

This Homo sapiens (Human) protein is Translation machinery-associated protein 7B.